The primary structure comprises 173 residues: Large ribosomal subunit protein uL16 (173 aa).

This sequence belongs to the universal ribosomal protein uL16 family.

In Methanococcus maripaludis (strain C5 / ATCC BAA-1333), this protein is Large ribosomal subunit protein uL16.